The primary structure comprises 440 residues: 3-phosphoshikimate 1-carboxyvinyltransferase (440 aa).

3-phosphoshikimate is bound by residues Lys26, Ser27, and Arg31. Lys26 is a phosphoenolpyruvate binding site. Residues Gly99 and Arg127 each contribute to the phosphoenolpyruvate site. 3-phosphoshikimate contacts are provided by Ser172, Gln174, Asp320, and Lys347. Gln174 contacts phosphoenolpyruvate. The active-site Proton acceptor is Asp320. Residues Arg351 and Arg392 each contribute to the phosphoenolpyruvate site.

The protein belongs to the EPSP synthase family. In terms of assembly, monomer.

It localises to the cytoplasm. The enzyme catalyses 3-phosphoshikimate + phosphoenolpyruvate = 5-O-(1-carboxyvinyl)-3-phosphoshikimate + phosphate. The protein operates within metabolic intermediate biosynthesis; chorismate biosynthesis; chorismate from D-erythrose 4-phosphate and phosphoenolpyruvate: step 6/7. In terms of biological role, catalyzes the transfer of the enolpyruvyl moiety of phosphoenolpyruvate (PEP) to the 5-hydroxyl of shikimate-3-phosphate (S3P) to produce enolpyruvyl shikimate-3-phosphate and inorganic phosphate. The chain is 3-phosphoshikimate 1-carboxyvinyltransferase from Xanthomonas euvesicatoria pv. vesicatoria (strain 85-10) (Xanthomonas campestris pv. vesicatoria).